A 321-amino-acid chain; its full sequence is NADPH-dependent codeinone reductase 1-5 (321 aa).

Residues Thr-27 and Asp-51 each coordinate NADPH. Catalysis depends on proton donor residues Tyr-56 and His-119. Position 119 (His-119) interacts with substrate. NADPH-binding residues include Gln-187, Ser-214, Leu-216, Ser-264, and Arg-269.

The protein belongs to the aldo/keto reductase family. As to expression, latex secreting cells (laticifer cells). Expressed constitutively and ubiquitously with highest levels in capsules.

It localises to the cytoplasm. The protein resides in the cytosol. The catalysed reaction is codeine + NADP(+) = codeinone + NADPH + H(+). It catalyses the reaction neopine + NADP(+) = neopinone + NADPH + H(+). It carries out the reaction morphine + NADP(+) = morphinone + NADPH + H(+). The enzyme catalyses neomorphine + NADP(+) = neomorphinone + NADPH + H(+). Its pathway is alkaloid biosynthesis; morphine biosynthesis. Its function is as follows. NADPH-dependent codeinone reductase involved in biosynthesis of morphinan-type benzylisoquinoline and opiate alkaloids natural products. Reduces codeinone to codeine in the penultimate step in morphine biosynthesis. Can use morphinone, hydrocodone and hydromorphone as substrate during reductive reaction with NADPH as cofactor, and morphine and dihydrocodeine as substrate during oxidative reaction with NADP as cofactor. Converts morphinone to morphine, and neomorphinone to neomorphine. Reduces irreversibly neopinone, a spontaneous isomer of codeinone, to neopine; in planta, neopine levels are limited to low levels. The protein is NADPH-dependent codeinone reductase 1-5 of Papaver somniferum (Opium poppy).